We begin with the raw amino-acid sequence, 262 residues long: Acyl-[acyl-carrier-protein]--UDP-N-acetylglucosamine O-acyltransferase (262 aa).

It belongs to the transferase hexapeptide repeat family. LpxA subfamily. In terms of assembly, homotrimer.

The protein localises to the cytoplasm. It catalyses the reaction a (3R)-hydroxyacyl-[ACP] + UDP-N-acetyl-alpha-D-glucosamine = a UDP-3-O-[(3R)-3-hydroxyacyl]-N-acetyl-alpha-D-glucosamine + holo-[ACP]. Its pathway is glycolipid biosynthesis; lipid IV(A) biosynthesis; lipid IV(A) from (3R)-3-hydroxytetradecanoyl-[acyl-carrier-protein] and UDP-N-acetyl-alpha-D-glucosamine: step 1/6. In terms of biological role, involved in the biosynthesis of lipid A, a phosphorylated glycolipid that anchors the lipopolysaccharide to the outer membrane of the cell. The chain is Acyl-[acyl-carrier-protein]--UDP-N-acetylglucosamine O-acyltransferase from Histophilus somni (strain 2336) (Haemophilus somnus).